Consider the following 156-residue polypeptide: Ribosome maturation factor RimP (156 aa).

Belongs to the RimP family.

Its subcellular location is the cytoplasm. Functionally, required for maturation of 30S ribosomal subunits. This is Ribosome maturation factor RimP from Oenococcus oeni (strain ATCC BAA-331 / PSU-1).